We begin with the raw amino-acid sequence, 144 residues long: D-aminoacyl-tRNA deacylase (144 aa).

Positions 136–137 match the Gly-cisPro motif, important for rejection of L-amino acids motif; sequence GP.

It belongs to the DTD family. Homodimer.

The protein localises to the cytoplasm. The catalysed reaction is glycyl-tRNA(Ala) + H2O = tRNA(Ala) + glycine + H(+). The enzyme catalyses a D-aminoacyl-tRNA + H2O = a tRNA + a D-alpha-amino acid + H(+). An aminoacyl-tRNA editing enzyme that deacylates mischarged D-aminoacyl-tRNAs. Also deacylates mischarged glycyl-tRNA(Ala), protecting cells against glycine mischarging by AlaRS. Acts via tRNA-based rather than protein-based catalysis; rejects L-amino acids rather than detecting D-amino acids in the active site. By recycling D-aminoacyl-tRNA to D-amino acids and free tRNA molecules, this enzyme counteracts the toxicity associated with the formation of D-aminoacyl-tRNA entities in vivo and helps enforce protein L-homochirality. This is D-aminoacyl-tRNA deacylase from Corynebacterium efficiens (strain DSM 44549 / YS-314 / AJ 12310 / JCM 11189 / NBRC 100395).